Consider the following 498-residue polypeptide: AP2-like ethylene-responsive transcription factor AIL7 (498 aa).

Over residues 186-195 (TSDQPLSCNN) the composition is skewed to polar residues. The interval 186-220 (TSDQPLSCNNGERGGNSNKKKTVSKKETSDDSKKK) is disordered. Over residues 209–220 (SKKETSDDSKKK) the composition is skewed to basic and acidic residues. 2 consecutive DNA-binding regions (AP2/ERF) follow at residues 231–297 (IYRG…TNFP) and 333–391 (IYRG…TNFE). Low complexity predominate over residues 422 to 451 (ESPSSSSSDHNLQQQQLLPSSSPSDQNPNS). Residues 422–452 (ESPSSSSSDHNLQQQQLLPSSSPSDQNPNSI) are disordered.

This sequence belongs to the AP2/ERF transcription factor family. AP2 subfamily. In terms of assembly, interacts with HDG2, and possibly with HDG3, HDG7, ANL2, ATML1 and PDF2. In terms of tissue distribution, expressed in roots, seedlings, inflorescence, and siliques. Also detected at low levels in leaves.

Its subcellular location is the nucleus. Functionally, probably acts as a transcriptional activator. Binds to the GCC-box pathogenesis-related promoter element. May be involved in the regulation of gene expression by stress factors and by components of stress signal transduction pathways. This chain is AP2-like ethylene-responsive transcription factor AIL7, found in Arabidopsis thaliana (Mouse-ear cress).